The primary structure comprises 665 residues: Transketolase (665 aa).

His-26 contributes to the substrate binding site. Residues His-66 and 114-116 (GPL) contribute to the thiamine diphosphate site. Residues 94-114 (NSKTPGHPETGETPGVETTTG) form a disordered region. The span at 97-114 (TPGHPETGETPGVETTTG) shows a compositional bias: low complexity. Mg(2+) is bound at residue Asp-155. The thiamine diphosphate site is built by Gly-156 and Asn-185. Positions 185 and 187 each coordinate Mg(2+). Substrate contacts are provided by His-261, Arg-358, and Ser-385. His-261 contacts thiamine diphosphate. The Proton donor role is filled by Glu-411. Position 437 (Phe-437) interacts with thiamine diphosphate. Positions 461, 469, and 520 each coordinate substrate.

The protein belongs to the transketolase family. As to quaternary structure, homodimer. Mg(2+) serves as cofactor. It depends on Ca(2+) as a cofactor. The cofactor is Mn(2+). Requires Co(2+) as cofactor. Thiamine diphosphate is required as a cofactor.

It carries out the reaction D-sedoheptulose 7-phosphate + D-glyceraldehyde 3-phosphate = aldehydo-D-ribose 5-phosphate + D-xylulose 5-phosphate. In terms of biological role, catalyzes the transfer of a two-carbon ketol group from a ketose donor to an aldose acceptor, via a covalent intermediate with the cofactor thiamine pyrophosphate. The polypeptide is Transketolase (tkt) (Buchnera aphidicola subsp. Acyrthosiphon pisum (strain APS) (Acyrthosiphon pisum symbiotic bacterium)).